The chain runs to 592 residues: Aspartate--tRNA(Asp/Asn) ligase (592 aa).

Glutamate 175 provides a ligand contact to L-aspartate. The interval 199–202 (QLFK) is aspartate. Arginine 221 contacts L-aspartate. Residues 221–223 (RDE) and glutamine 230 each bind ATP. Histidine 450 lines the L-aspartate pocket. Glutamate 483 contacts ATP. Arginine 490 contacts L-aspartate. 535-538 (GLDR) provides a ligand contact to ATP.

It belongs to the class-II aminoacyl-tRNA synthetase family. Type 1 subfamily. Homodimer.

It is found in the cytoplasm. The catalysed reaction is tRNA(Asx) + L-aspartate + ATP = L-aspartyl-tRNA(Asx) + AMP + diphosphate. Functionally, aspartyl-tRNA synthetase with relaxed tRNA specificity since it is able to aspartylate not only its cognate tRNA(Asp) but also tRNA(Asn). Reaction proceeds in two steps: L-aspartate is first activated by ATP to form Asp-AMP and then transferred to the acceptor end of tRNA(Asp/Asn). The sequence is that of Aspartate--tRNA(Asp/Asn) ligase from Acinetobacter baylyi (strain ATCC 33305 / BD413 / ADP1).